The following is a 952-amino-acid chain: Probable outer membrane protein pmp16 (952 aa).

Residues 1 to 27 (MSKTPPKFLFYLGNFTACMFGMTPAVY) form the signal peptide. The Autotransporter domain occupies 646-952 (GDLATTPLWQ…HLQAGSTLKF (307 aa)).

This sequence belongs to the PMP outer membrane protein family.

The protein localises to the secreted. The protein resides in the cell wall. Its subcellular location is the cell outer membrane. The chain is Probable outer membrane protein pmp16 (pmp16) from Chlamydia pneumoniae (Chlamydophila pneumoniae).